The sequence spans 402 residues: Dihydrolipoyllysine-residue acetyltransferase component of pyruvate dehydrogenase complex (402 aa).

In terms of domain architecture, Lipoyl-binding spans 2 to 77; that stretch reads ANEFKFTDVG…HIGQVMAVID (76 aa). N6-lipoyllysine is present on Lys43. Disordered regions lie at residues 82–110 and 143–172; these read AAAP…APVT and PQPT…PSGE. 2 stretches are compositionally biased toward pro residues: residues 87 to 107 and 143 to 162; these read APQP…PTPA and PQPT…PTPA. His374 is an active-site residue.

This sequence belongs to the 2-oxoacid dehydrogenase family. As to quaternary structure, forms a 24-polypeptide structural core with octahedral symmetry. (R)-lipoate is required as a cofactor.

The enzyme catalyses N(6)-[(R)-dihydrolipoyl]-L-lysyl-[protein] + acetyl-CoA = N(6)-[(R)-S(8)-acetyldihydrolipoyl]-L-lysyl-[protein] + CoA. In terms of biological role, the pyruvate dehydrogenase complex catalyzes the overall conversion of pyruvate to acetyl-CoA and CO(2). It contains multiple copies of three enzymatic components: pyruvate dehydrogenase (E1), dihydrolipoamide acetyltransferase (E2) and lipoamide dehydrogenase (E3). The chain is Dihydrolipoyllysine-residue acetyltransferase component of pyruvate dehydrogenase complex (pdhC) from Mycoplasma pneumoniae (strain ATCC 29342 / M129 / Subtype 1) (Mycoplasmoides pneumoniae).